We begin with the raw amino-acid sequence, 293 residues long: SAGA-associated factor 29 (293 aa).

A coiled-coil region spans residues 3 to 86 (LVSADSRIAE…LRKALDKIAE (84 aa)). Residues 152–293 (GDYVAKPGDK…VVACKEPKKK (142 aa)) form the SGF29 C-terminal domain. Histone H3K4me3 N-terminus binding stretches follow at residues 194 to 196 (DID) and 240 to 243 (QTTC). Residues 264-266 (FED) form a histone H3K4me3 binding region. At Lys288 the chain carries N6-acetyllysine.

The protein belongs to the SGF29 family. Interacts with dimethylated and trimethylated 'Lys-4' of histone H3 (H3K4me2 and H3K4me3), with a preference for the trimethylated form (H3K4me3). Component of some SAGA-type complexes. Component of the ADA2A-containing complex (ATAC), composed of KAT14, KAT2A, TADA2L, TADA3L, ZZ3, MBIP, WDR5, YEATS2, CCDC101 and DR1. Interacts with (methylated) CGAS. Interacts with TADA3L, GCN5L2, SUPT3H and MYC.

It is found in the nucleus. Its function is as follows. Chromatin reader component of some histone acetyltransferase (HAT) SAGA-type complexes like the TFTC-HAT, ATAC or STAGA complexes. SGF29 specifically recognizes and binds methylated 'Lys-4' of histone H3 (H3K4me), with a preference for trimethylated form (H3K4me3). In the SAGA-type complexes, SGF29 is required to recruit complexes to H3K4me. Involved in the response to endoplasmic reticulum (ER) stress by recruiting the SAGA complex to H3K4me, thereby promoting histone H3 acetylation and cell survival. Also binds non-histone proteins that are methylated on Lys residues: specifically recognizes and binds CGAS monomethylated on 'Lys-491'. This chain is SAGA-associated factor 29, found in Mus musculus (Mouse).